The chain runs to 878 residues: Staphylococcal nuclease domain-containing protein 1 (878 aa).

TNase-like domains follow at residues 3-142 (QYVS…IWGP) and 167-312 (KKLN…IWKN). Serine 316 is subject to Phosphoserine. TNase-like domains lie at 326–464 (KDYS…MWSG) and 493–626 (RKLS…MWHD). One can recognise a Tudor domain in the interval 695–755 (KINVGMNVAA…SSLPDTYTKL (61 aa)).

Its subcellular location is the cytoplasm. The protein localises to the cytosol. In Schizosaccharomyces pombe (strain 972 / ATCC 24843) (Fission yeast), this protein is Staphylococcal nuclease domain-containing protein 1.